We begin with the raw amino-acid sequence, 463 residues long: MLKIYNTLTRQKEEFKPIHPGKVGMYVCGVTIYDLCHIGHGRTFVAFDVVVRYLRYLGYDVTFVRNITDVDDKIIKRAAENAESCDALTERLIGDMHADFDALKLQRPDIEPRATQHIGEIITLVQSLLDQNYAYVADSGDVLFSIDSFPEYGRLSGQNIEQLQAGARVDVEESKRNPMDFVLWKMSKPGEPMWDSPWGAGRPGWHIECSAMNSKHLGHHFDIHGGGSDLQFPHHENEIAQSCCAHHTPYVNTWMHSGMVMVDEEKMSKSLGNFFTIRDVLKVYDAETVRYFLMSGHYRSPLNYSDLNLQQARASLERLYTALRGVEDGEEQAALSAPFDERFKAAMDDDFNTPEAYSVLFDLARDLNRAKQDSPADAVALAACLRRLGGVLGLLQQQPEQFLQSGAAAETDDVAEIELLIKTRNDARASKNWALADEARNKLTEMGIVLEDGPQGTTWRRKG.

Cys-28 serves as a coordination point for Zn(2+). The short motif at 30–40 (VTIYDLCHIGH) is the 'HIGH' region element. Zn(2+) contacts are provided by Cys-209, His-234, and Glu-238. The 'KMSKS' region motif lies at 266 to 270 (KMSKS). Lys-269 provides a ligand contact to ATP.

It belongs to the class-I aminoacyl-tRNA synthetase family. In terms of assembly, monomer. Zn(2+) is required as a cofactor.

The protein resides in the cytoplasm. The catalysed reaction is tRNA(Cys) + L-cysteine + ATP = L-cysteinyl-tRNA(Cys) + AMP + diphosphate. The sequence is that of Cysteine--tRNA ligase from Tolumonas auensis (strain DSM 9187 / NBRC 110442 / TA 4).